A 342-amino-acid polypeptide reads, in one-letter code: Dysbindin (342 aa).

A Phosphoserine modification is found at Ser-11. Residues 83–180 (LSAHWEKKQA…AELDAEHSQK (98 aa)) adopt a coiled-coil conformation. The short motif at 243–256 (LMDISDQEALDVFL) is the Nuclear export signal element. A disordered region spans residues 263-342 (NTLLSPISGP…ATLHSDDSDS (80 aa)). Low complexity predominate over residues 286–305 (PTPSQAPATPPSSSSPGTDP). Ser-316, Ser-321, and Ser-340 each carry phosphoserine.

It belongs to the dysbindin family. In terms of assembly, interacts (via its coiled coil domain) with KXD1. Interacts with CMYA5, PI4K2 and RNF151. Component of the biogenesis of lysosome-related organelles complex 1 (BLOC-1) composed of at least BLOC1S1, BLOC1S2, BLOC1S3, BLOC1S4, BLOC1S5, BLOC1S6, DTNBP1/BLOC1S7 and SNAPIN/BLOC1S8. Interacts directly in the complex with BLOC1S5, BLOC1S6 and SNAPIN/BLOC1S8. The BLOC-1 complex associates with the AP-3 protein complex and membrane protein cargos. This BLOC-1 complex also associates with the BLOC-2 complex in endosomes. Binds to DTNA and DTNB but may not be a physiological binding partner. Interacts with the DNA-dependent protein kinase complex DNA-PK; the interaction phosphorylates DTNBP1 in vitro. Interacts directly in this complex with XRCC5 and XRCC6. Interacts with AP3M1, AP3B2 and TRIM32. Interacts with XPO1; the interaction exports DTNBP1 out of the nucleus. Post-translationally, ubiquitinated by TRIM32. Ubiquitination leads to DTNBP1 degradation.

It is found in the cytoplasm. The protein localises to the cytoplasmic vesicle membrane. It localises to the cytoplasmic vesicle. The protein resides in the secretory vesicle. Its subcellular location is the synaptic vesicle membrane. It is found in the endosome membrane. The protein localises to the melanosome membrane. It localises to the nucleus. The protein resides in the postsynaptic density. Its subcellular location is the presynaptic cell membrane. It is found in the endoplasmic reticulum. In terms of biological role, component of the BLOC-1 complex, a complex that is required for normal biogenesis of lysosome-related organelles (LRO), such as platelet dense granules and melanosomes. In concert with the AP-3 complex, the BLOC-1 complex is required to target membrane protein cargos into vesicles assembled at cell bodies for delivery into neurites and nerve terminals. The BLOC-1 complex, in association with SNARE proteins, is also proposed to be involved in neurite extension. Associates with the BLOC-2 complex to facilitate the transport of TYRP1 independent of AP-3 function. Plays a role in synaptic vesicle trafficking and in neurotransmitter release. Plays a role in the regulation of cell surface exposure of DRD2. May play a role in actin cytoskeleton reorganization and neurite outgrowth. May modulate MAPK8 phosphorylation. Appears to promote neuronal transmission and viability through regulating the expression of SNAP25 and SYN1, modulating PI3-kinase-Akt signaling and influencing glutamatergic release. Regulates the expression of SYN1 through binding to its promoter. Modulates prefrontal cortical activity via the dopamine/D2 pathway. The protein is Dysbindin (DTNBP1) of Bos taurus (Bovine).